The sequence spans 129 residues: MTKADIIEGVYEKVGFSKKESAEIVELVFDTLKETLERGDKIKISGFGNFQVRQKKARVGRNPQTGKEIEISARRVLTFRPSQVLKSALNGEAPPEDHAEIDAREEAAADAAEARGEDFDEEGMEDMEG.

Residues 87–129 (SALNGEAPPEDHAEIDAREEAAADAAEARGEDFDEEGMEDMEG) are disordered. Positions 95-117 (PEDHAEIDAREEAAADAAEARGE) are enriched in basic and acidic residues. Residues 118–129 (DFDEEGMEDMEG) show a composition bias toward acidic residues.

The protein belongs to the bacterial histone-like protein family. In terms of assembly, heterodimer of an alpha and a beta chain.

Its function is as follows. This protein is one of the two subunits of integration host factor, a specific DNA-binding protein that functions in genetic recombination as well as in transcriptional and translational control. It is necessary for normal cell growth and the production of carotenoids in response to light. The polypeptide is Integration host factor subunit alpha (ihfA) (Myxococcus xanthus).